A 604-amino-acid polypeptide reads, in one-letter code: Glutamine--fructose-6-phosphate aminotransferase [isomerizing] (604 aa).

C2 serves as the catalytic Nucleophile; for GATase activity. The region spanning 2 to 218 (CGIVGVVGNT…DKELVIVKKD (217 aa)) is the Glutamine amidotransferase type-2 domain. SIS domains follow at residues 284–423 (IIKS…ANGK) and 456–594 (VEQL…VDKP). The active-site For Fru-6P isomerization activity is K599.

In terms of assembly, homodimer.

The protein localises to the cytoplasm. It catalyses the reaction D-fructose 6-phosphate + L-glutamine = D-glucosamine 6-phosphate + L-glutamate. Functionally, catalyzes the first step in hexosamine metabolism, converting fructose-6P into glucosamine-6P using glutamine as a nitrogen source. This chain is Glutamine--fructose-6-phosphate aminotransferase [isomerizing], found in Streptococcus agalactiae serotype III (strain NEM316).